Here is a 369-residue protein sequence, read N- to C-terminus: Spore membrane assembly protein 2 (369 aa).

Residues 1–6 (MLFPKR) lie on the Cytoplasmic side of the membrane. The helical transmembrane segment at 7 to 27 (LIVWGVLLILSLSQFVLYLPA) threads the bilayer. Over 28–220 (TTCTNSKGLR…NLAFILMMFN (193 aa)) the chain is Lumenal. A helical membrane pass occupies residues 221-241 (GMVFYFAVLEIIVGFLSICVV). Topologically, residues 242 to 265 (SAFGGALSVGKRHRLFPILLKSSS) are cytoplasmic. A helical transmembrane segment spans residues 266–286 (SILVVIATLTILCNIVYLIAL). Residues 287 to 319 (KTLEPEEVTDVGSDNAAVHTTGWELLKVNVGSG) lie on the Lumenal side of the membrane. Residues 320–340 (FIMGLARYAIQWVLLVLAFLA) form a helical membrane-spanning segment. Topologically, residues 341–369 (ANHYKAKPKKSDKYTEDTSNSPSPDLMEK) are cytoplasmic. The segment at 348 to 369 (PKKSDKYTEDTSNSPSPDLMEK) is disordered.

It belongs to the SMA2 family.

Its subcellular location is the prospore membrane. It localises to the endoplasmic reticulum. Its function is as follows. Involved in spore and ascus formation. Required for the efficient assembly of the precursors of the prospore membrane to a continuous prospore membrane. This Saccharomyces cerevisiae (strain YJM789) (Baker's yeast) protein is Spore membrane assembly protein 2 (SMA2).